We begin with the raw amino-acid sequence, 354 residues long: MLVLGIESSCDETGVALYDTERGLRSHCLHTQMAMHAEYGGVVPELASRDHIRRLVPLTEGCLAQAGASYGDIDAVAFTQGPGLGGALLAGSSYANALALALDKPVIPVHHLEGHLLSPLLAEEKPDFPFVALLVSGGHTQIMAVRGIGDYELLGESVDDAAGEAFDKTAKLLGLPYPGGAKLSELAESGRPEAFVFPRPMIHSDDLQMSFSGLKTAVLTAVEKVREANGSETIPEQTRNNICRAFQDAVVEVLEAKVKKALLQTGFRTVVVAGGVGANRKLRETFGNMTVQIPTPKGKPKHPSEKVSVFFPPMAYCTDNGAMIAFAGAMHLGKGREVGAFNVRPRWSLSEIVK.

Residues H111 and H115 each coordinate Fe cation. Substrate contacts are provided by residues L134 to G138, D167, G180, and N279. D319 serves as a coordination point for Fe cation.

It belongs to the KAE1 / TsaD family. It depends on Fe(2+) as a cofactor.

Its subcellular location is the cytoplasm. The catalysed reaction is L-threonylcarbamoyladenylate + adenosine(37) in tRNA = N(6)-L-threonylcarbamoyladenosine(37) in tRNA + AMP + H(+). Functionally, required for the formation of a threonylcarbamoyl group on adenosine at position 37 (t(6)A37) in tRNAs that read codons beginning with adenine. Is involved in the transfer of the threonylcarbamoyl moiety of threonylcarbamoyl-AMP (TC-AMP) to the N6 group of A37, together with TsaE and TsaB. TsaD likely plays a direct catalytic role in this reaction. The protein is tRNA N6-adenosine threonylcarbamoyltransferase of Neisseria gonorrhoeae (strain ATCC 700825 / FA 1090).